We begin with the raw amino-acid sequence, 135 residues long: Large ribosomal subunit protein uL16 (135 aa).

Belongs to the universal ribosomal protein uL16 family. In terms of assembly, part of the 50S ribosomal subunit.

Functionally, binds 23S rRNA and is also seen to make contacts with the A and possibly P site tRNAs. The sequence is that of Large ribosomal subunit protein uL16 from Bdellovibrio bacteriovorus (strain ATCC 15356 / DSM 50701 / NCIMB 9529 / HD100).